The following is a 60-amino-acid chain: Waprin-Lio1 (60 aa).

The N-terminal stretch at 1-8 is a signal peptide; it reads MLLGTTSA. In terms of domain architecture, WAP spans 9 to 59; sequence QVVRPGSCPNVDVPIPPLGLCRTTCQTDANCQEGRKCCKNGCGFMTCETAR. Disulfide bonds link C16–C46, C29–C50, C33–C45, and C39–C55.

Belongs to the venom waprin family. In terms of tissue distribution, expressed by the venom gland.

It localises to the secreted. Damages membranes of susceptible bacteria. Has no hemolytic activity. Not toxic to mice. Does not inhibit the proteinases elastase and cathepsin G. The chain is Waprin-Lio1 from Erythrolamprus poecilogyrus (Water snake).